Here is a 422-residue protein sequence, read N- to C-terminus: Hispidin-3-hydroxylase (422 aa).

A helical transmembrane segment spans residues 6 to 26 (NSLSVLIVGAGLGGLAAAIAL). Ala-50, Arg-108, and Asp-318 together coordinate FAD.

This sequence belongs to the paxM FAD-dependent monooxygenase family. As to quaternary structure, monomer. It depends on FAD as a cofactor.

It localises to the membrane. It carries out the reaction hispidin + NADH + O2 + H(+) = 3-hydroxyhispidin + NAD(+) + H2O. It catalyses the reaction hispidin + NADPH + O2 + H(+) = 3-hydroxyhispidin + NADP(+) + H2O. The protein operates within secondary metabolite biosynthesis. Its function is as follows. Hispidin-3-hydroxylase; part of the gene cluster that mediates the fungal bioluminescence cycle. Hydroxylates hispidin in order to produce the fungal luciferin 3-hydroxyhispidin. The fungal bioluminescence cycle begins with the hispidin synthetase that catalyzes the formation of hispidin which is further hydroxylated by the hispidin-3-hydroxylase, yielding the fungal luciferin 3-hydroxyhispidin. The luciferase then produces an endoperoxide as a high-energy intermediate with decomposition that yields oxyluciferin (also known as caffeoylpyruvate) and light emission. Oxyluciferin can be recycled to caffeic acid by caffeoylpyruvate hydrolase. In Neonothopanus nambi (Agaricus nambi), this protein is Hispidin-3-hydroxylase.